The sequence spans 216 residues: Cytidylate kinase (216 aa).

Position 7-15 (7-15 (GPSGTGKST)) interacts with ATP.

It belongs to the cytidylate kinase family. Type 1 subfamily.

The protein localises to the cytoplasm. The enzyme catalyses CMP + ATP = CDP + ADP. The catalysed reaction is dCMP + ATP = dCDP + ADP. This chain is Cytidylate kinase, found in Chlamydia trachomatis serovar D (strain ATCC VR-885 / DSM 19411 / UW-3/Cx).